A 306-amino-acid chain; its full sequence is Large ribosomal subunit protein uL2m (306 aa).

The transit peptide at 1–60 directs the protein to the mitochondrion; it reads MALRVVTRALGSLSLTPRIAAVPGPSLLPAAQVTNNVLLQLPSASMLLPSRPLLTSVALS.

Belongs to the universal ribosomal protein uL2 family. As to quaternary structure, component of the mitochondrial ribosome large subunit (39S) which comprises a 16S rRNA and about 50 distinct proteins.

Its subcellular location is the mitochondrion. This chain is Large ribosomal subunit protein uL2m (MRPL2), found in Bos taurus (Bovine).